A 79-amino-acid polypeptide reads, in one-letter code: Small ribosomal subunit protein uS17 (79 aa).

The protein belongs to the universal ribosomal protein uS17 family. In terms of assembly, part of the 30S ribosomal subunit.

In terms of biological role, one of the primary rRNA binding proteins, it binds specifically to the 5'-end of 16S ribosomal RNA. The polypeptide is Small ribosomal subunit protein uS17 (Rhizobium johnstonii (strain DSM 114642 / LMG 32736 / 3841) (Rhizobium leguminosarum bv. viciae)).